A 450-amino-acid polypeptide reads, in one-letter code: Divalent metal cation transporter MntH (450 aa).

11 consecutive transmembrane segments (helical) span residues 34-54 (LSFL…GNWI), 59-81 (GGAQ…AMLL), 108-128 (IAII…IAEV), 141-161 (IPLI…LFIM), 170-190 (AIVG…VYIS), 212-232 (GILY…NLYL), 263-283 (IQLS…ASLF), 305-325 (PVLG…ALLA), 361-381 (SLAV…AAKI), 383-403 (QLLV…LIPL), and 422-442 (VNII…YLIV).

Belongs to the NRAMP family.

Its subcellular location is the cell membrane. Functionally, h(+)-stimulated, divalent metal cation uptake system. This Staphylococcus aureus (strain MRSA252) protein is Divalent metal cation transporter MntH.